Here is a 281-residue protein sequence, read N- to C-terminus: MKSLTLKAPAKVNYRLDVLRRRPDGYHDLRMIMQRIDLCDEITITLSDTSGVRVTCGREGVPDGPENIAWRAANALLALSGLETGIDIAITKNIPVAAGLGGGSSDAATVLLGVNELLGLGLSIERLMEVGVTLGADVPFFVFGKTALAEGIGEVLTAIDAVPPLWLVIVNPNIPVSTAWVYQSLRLTGEWNGDTIPRFFKDVADVCAVLANDLELVTIERYPVIGEIKERLVAAGAAGALMSGSGPTVFGLFASEEEARGAAQSITNSSDWFVVAVRALV.

K11 is an active-site residue. Residue 95 to 105 (PVAAGLGGGSS) coordinates ATP. The active site involves D137.

This sequence belongs to the GHMP kinase family. IspE subfamily.

The enzyme catalyses 4-CDP-2-C-methyl-D-erythritol + ATP = 4-CDP-2-C-methyl-D-erythritol 2-phosphate + ADP + H(+). Its pathway is isoprenoid biosynthesis; isopentenyl diphosphate biosynthesis via DXP pathway; isopentenyl diphosphate from 1-deoxy-D-xylulose 5-phosphate: step 3/6. Catalyzes the phosphorylation of the position 2 hydroxy group of 4-diphosphocytidyl-2C-methyl-D-erythritol. This is 4-diphosphocytidyl-2-C-methyl-D-erythritol kinase from Geobacter metallireducens (strain ATCC 53774 / DSM 7210 / GS-15).